Consider the following 429-residue polypeptide: Enolase (429 aa).

Residue Gln-164 participates in (2R)-2-phosphoglycerate binding. The active-site Proton donor is the Glu-206. 3 residues coordinate Mg(2+): Asp-243, Glu-286, and Asp-313. The (2R)-2-phosphoglycerate site is built by Lys-338, Arg-367, Ser-368, and Lys-389. The active-site Proton acceptor is the Lys-338.

It belongs to the enolase family. Requires Mg(2+) as cofactor.

It is found in the cytoplasm. The protein localises to the secreted. It localises to the cell surface. The catalysed reaction is (2R)-2-phosphoglycerate = phosphoenolpyruvate + H2O. It participates in carbohydrate degradation; glycolysis; pyruvate from D-glyceraldehyde 3-phosphate: step 4/5. Functionally, catalyzes the reversible conversion of 2-phosphoglycerate (2-PG) into phosphoenolpyruvate (PEP). It is essential for the degradation of carbohydrates via glycolysis. The chain is Enolase from Thermosipho africanus (strain TCF52B).